The chain runs to 91 residues: Large ribosomal subunit protein uL23 (91 aa).

The protein belongs to the universal ribosomal protein uL23 family. Part of the 50S ribosomal subunit. Contacts protein L29, and trigger factor when it is bound to the ribosome.

In terms of biological role, one of the early assembly proteins it binds 23S rRNA. One of the proteins that surrounds the polypeptide exit tunnel on the outside of the ribosome. Forms the main docking site for trigger factor binding to the ribosome. This Staphylococcus epidermidis (strain ATCC 35984 / DSM 28319 / BCRC 17069 / CCUG 31568 / BM 3577 / RP62A) protein is Large ribosomal subunit protein uL23.